Consider the following 118-residue polypeptide: Small ribosomal subunit protein uS13 (118 aa).

A disordered region spans residues 94–118 (GLPLRGQRTRTNARTRKGPRRPIRK).

This sequence belongs to the universal ribosomal protein uS13 family. Part of the 30S ribosomal subunit. Forms a loose heterodimer with protein S19. Forms two bridges to the 50S subunit in the 70S ribosome.

In terms of biological role, located at the top of the head of the 30S subunit, it contacts several helices of the 16S rRNA. In the 70S ribosome it contacts the 23S rRNA (bridge B1a) and protein L5 of the 50S subunit (bridge B1b), connecting the 2 subunits; these bridges are implicated in subunit movement. Contacts the tRNAs in the A and P-sites. The polypeptide is Small ribosomal subunit protein uS13 (Thioalkalivibrio sulfidiphilus (strain HL-EbGR7)).